A 266-amino-acid chain; its full sequence is uncharacterized protein (266 aa).

This sequence belongs to the chlamydial CPn_0087/CT_309/TC_0583 family.

This is an uncharacterized protein from Chlamydia trachomatis serovar D (strain ATCC VR-885 / DSM 19411 / UW-3/Cx).